A 208-amino-acid chain; its full sequence is MEVNVVNIKNEVVGKVQLSAEVFGVQLRRDVLRDVVTWQLAKRRAGTHKTRCISDVSGTTAKPYRQKHTGRARQGSLRSPQFRGGAVVFGPVNRSHAYSLNKKVRRLGLKVALSMKVSDSKLVVLDDSGLLLEKTADAHVAFGNFGAHGSYLVVAETYEDKVMCACRNLPNVDLLKYAGINVLDILRHDCVILTVGTVKCLESRLCNG.

Belongs to the universal ribosomal protein uL4 family. As to quaternary structure, part of the 50S ribosomal subunit.

Its function is as follows. One of the primary rRNA binding proteins, this protein initially binds near the 5'-end of the 23S rRNA. It is important during the early stages of 50S assembly. It makes multiple contacts with different domains of the 23S rRNA in the assembled 50S subunit and ribosome. In terms of biological role, forms part of the polypeptide exit tunnel. In Anaplasma marginale (strain Florida), this protein is Large ribosomal subunit protein uL4.